Here is a 159-residue protein sequence, read N- to C-terminus: MNEEYSLQDLLGQESELQFAFFNNQTAWKLGCQLKKIAEDNSTLVAIEVYAFSQTLFSYAMSGTQLDNQIWIKRKRQTVLRFGHSSYYIGQYNKAKNREFEQQVHINADDYCAHGGAFPIRIKKCGLVGVVTVSGLPQREDHQMVIDALTDLIKSVQKS.

This sequence belongs to the UPF0303 family.

This Psychromonas ingrahamii (strain DSM 17664 / CCUG 51855 / 37) protein is UPF0303 protein Ping_1243.